The primary structure comprises 1165 residues: Peroxisomal ATPase PEX6 (1165 aa).

Belongs to the AAA ATPase family. Interacts with PEX1; forming the PEX1-PEX6 AAA ATPase complex, which is composed of a heterohexamer formed by a trimer of PEX1-PEX6 dimers.

The protein resides in the membrane. It carries out the reaction ATP + H2O = ADP + phosphate + H(+). In terms of biological role, component of the PEX1-PEX6 AAA ATPase complex involved in peroxisome biosynthesis. The complex acts as a protein dislocase complex that mediates the ATP-dependent extraction of the PEX5 receptor from peroxisomal membranes, an essential step for PEX5 recycling. Specifically recognizes PEX5 monoubiquitinated at 'Cys-6', and pulls it out of the peroxisome lumen through the PEX2-PEX10-PEX12 retrotranslocation channel. Extraction by the PEX1-PEX6 AAA ATPase complex is accompanied by unfolding of the TPR repeats and release of bound cargo from PEX5. This chain is Peroxisomal ATPase PEX6, found in Komagataella pastoris (Yeast).